Here is a 274-residue protein sequence, read N- to C-terminus: Rhamnulose-1-phosphate aldolase (274 aa).

Glutamate 117 is an active-site residue. 3 residues coordinate Zn(2+): histidine 141, histidine 143, and histidine 212.

Belongs to the aldolase class II family. RhaD subfamily. Homotetramer. The cofactor is Zn(2+).

It is found in the cytoplasm. The enzyme catalyses L-rhamnulose 1-phosphate = (S)-lactaldehyde + dihydroxyacetone phosphate. Its pathway is carbohydrate degradation; L-rhamnose degradation; glycerone phosphate from L-rhamnose: step 3/3. In terms of biological role, catalyzes the reversible cleavage of L-rhamnulose-1-phosphate to dihydroxyacetone phosphate (DHAP) and L-lactaldehyde. In Escherichia coli O6:H1 (strain CFT073 / ATCC 700928 / UPEC), this protein is Rhamnulose-1-phosphate aldolase.